A 245-amino-acid polypeptide reads, in one-letter code: Small ribosomal subunit protein uS3 (245 aa).

A KH type-2 domain is found at 39–107 (IRKAIREKLK…EVRVNLVEIR (69 aa)). Positions 216-245 (DKRLETSGQSRARANTNQRGPASGAQAAGA) are disordered. The segment covering 221 to 235 (TSGQSRARANTNQRG) has biased composition (polar residues).

The protein belongs to the universal ribosomal protein uS3 family. As to quaternary structure, part of the 30S ribosomal subunit. Forms a tight complex with proteins S10 and S14.

Binds the lower part of the 30S subunit head. Binds mRNA in the 70S ribosome, positioning it for translation. The polypeptide is Small ribosomal subunit protein uS3 (Hyphomonas neptunium (strain ATCC 15444)).